The chain runs to 257 residues: BTB/POZ domain-containing protein KCTD1 (257 aa).

The tract at residues 1-25 (MSRPLITRSPASPLNNQGIPTPAQL) is disordered. Phosphoserine occurs at positions 9 and 12. Residues 9–25 (SPASPLNNQGIPTPAQL) show a composition bias toward polar residues. The BTB domain occupies 30–100 (APVHIDVGGH…LRTSKLLIPD (71 aa)).

Forms homopentamers. Interacts with KCTD15, probably forming heteropentamers depending on its abundance in a cell-type dependent manner. Interacts with TFAP2A, TFAP2B and TFAP2C via the BTB domain. Sumoylated. As to expression, expressed in mammary gland, kidney, brain and ovary.

It localises to the nucleus. Functionally, may repress the transcriptional activity of AP-2 family members, including TFAP2A, TFAP2B and TFAP2C to various extent. The protein is BTB/POZ domain-containing protein KCTD1 (KCTD1) of Homo sapiens (Human).